The sequence spans 441 residues: UBX domain-containing protein 6 (441 aa).

Positions 1–10 (MKKFFQEFKA) are mediates interaction with LMAN1. N-acetylalanine is present on Lys2. Disordered regions lie at residues 13-79 (KFKS…QDTI) and 87-106 (LQAE…NVVS). The span at 22 to 36 (KLKESVGEKAHKEKP) shows a compositional bias: basic and acidic residues. Residues 51-63 (EAQMAAAAALARL) are VCP/p97-interacting motif (VIM). Positions 52–61 (AQMAAAAALA) are enriched in low complexity. Phosphoserine is present on Ser96. The PUB domain maps to 175 to 244 (VDTIAKYLDN…DPEEFYVLSE (70 aa)). The region spanning 332 to 408 (RKYNYTLLRV…GLVPSALLTF (77 aa)) is the UBX domain.

In terms of assembly, interacts with VCP through the PUB domain (via C-terminus) and VIM motif (via N-terminus); the interaction is direct. Forms a ternary complex with CAV1 and VCP. Interacts with SYVN1. Interacts with HERPUD1. Interacts with VCPKMT. May interact with DERL1. Interacts with PLAA, VCP and YOD1; may form a complex involved in macroautophagy. Interacts with LMAN1. As to expression, enhanced expression in testis.

It is found in the cytoplasm. Its subcellular location is the cytosol. It localises to the membrane. The protein resides in the nucleus. The protein localises to the cytoskeleton. It is found in the microtubule organizing center. Its subcellular location is the centrosome. It localises to the early endosome membrane. The protein resides in the late endosome membrane. The protein localises to the lysosome membrane. In terms of biological role, may negatively regulate the ATPase activity of VCP, an ATP-driven segregase that associates with different cofactors to control a wide variety of cellular processes. As a cofactor of VCP, it may play a role in the transport of CAV1 to lysosomes for degradation. It may also play a role in endoplasmic reticulum-associated degradation (ERAD) of misfolded proteins. Together with VCP and other cofactors, it may play a role in macroautophagy, regulating for instance the clearance of damaged lysosomes. The polypeptide is UBX domain-containing protein 6 (Homo sapiens (Human)).